We begin with the raw amino-acid sequence, 254 residues long: Small ribosomal subunit protein uS2 (254 aa).

A compositionally biased stretch (basic and acidic residues) spans 228-248; sequence RKERKGQDAEEELKKASEPKA. Residues 228-254 form a disordered region; sequence RKERKGQDAEEELKKASEPKAAEAAAE.

The protein belongs to the universal ribosomal protein uS2 family.

This chain is Small ribosomal subunit protein uS2, found in Nitratidesulfovibrio vulgaris (strain ATCC 29579 / DSM 644 / CCUG 34227 / NCIMB 8303 / VKM B-1760 / Hildenborough) (Desulfovibrio vulgaris).